The following is a 231-amino-acid chain: TATA-box-binding protein (231 aa).

2 consecutive repeat copies span residues 58-134 (LQNI…ARII) and 148-225 (IQNI…YPVL).

It belongs to the TBP family. Belongs to the TFIID complex together with the TBP-associated factors (TAFs). Binds DNA as monomer.

Its subcellular location is the nucleus. In terms of biological role, general transcription factor that functions at the core of the DNA-binding multiprotein factor TFIID. Binding of TFIID to the TATA box is the initial transcriptional step of the pre-initiation complex (PIC), playing a role in the activation of eukaryotic genes transcribed by RNA polymerase II. The polypeptide is TATA-box-binding protein (tbp1) (Schizosaccharomyces pombe (strain 972 / ATCC 24843) (Fission yeast)).